Reading from the N-terminus, the 401-residue chain is Exodeoxyribonuclease 7 large subunit (401 aa).

This sequence belongs to the XseA family. In terms of assembly, heterooligomer composed of large and small subunits.

The protein resides in the cytoplasm. It catalyses the reaction Exonucleolytic cleavage in either 5'- to 3'- or 3'- to 5'-direction to yield nucleoside 5'-phosphates.. Functionally, bidirectionally degrades single-stranded DNA into large acid-insoluble oligonucleotides, which are then degraded further into small acid-soluble oligonucleotides. This chain is Exodeoxyribonuclease 7 large subunit, found in Clostridium botulinum (strain Langeland / NCTC 10281 / Type F).